A 323-amino-acid chain; its full sequence is Lipid A biosynthesis acyltransferase 1 (323 aa).

A helical transmembrane segment spans residues 23-43; it reads YWGAWLGVAAMAGIALTPPKF. Positions 139–144 match the HXXXXD motif motif; sequence HGWAVD.

This sequence belongs to the LpxL/LpxM/LpxP family. LpxM subfamily.

Its subcellular location is the cell inner membrane. The catalysed reaction is an alpha-Kdo-(2-&gt;4)-alpha-Kdo-(2-&gt;6)-(acyl)-lipid IVA + a fatty acyl-[ACP] = an alpha-Kdo-(2-&gt;4)-alpha-Kdo-(2-&gt;6)-lipid A + holo-[ACP]. The protein operates within glycolipid biosynthesis; KDO(2)-lipid A biosynthesis; KDO(2)-lipid A from CMP-3-deoxy-D-manno-octulosonate and lipid IV(A): step 4/4. It functions in the pathway bacterial outer membrane biogenesis; lipopolysaccharide biosynthesis. Functionally, catalyzes the transfer of an acyl chain from an acyl-[acyl-carrier-protein] (ACP) to a Kdo(2)-(acyl)-lipid IV(A) to form a Kdo(2)-lipid A. The sequence is that of Lipid A biosynthesis acyltransferase 1 from Shigella flexneri.